The following is a 1018-amino-acid chain: D-2-hydroxyglutarate dehydrogenase (1018 aa).

One can recognise an FAD-binding PCMH-type domain in the interval 48–281 (YQLLPDAVVF…TEARLDITRL (234 aa)). (R)-2-hydroxyglutarate-binding residues include Arg-402 and His-500. The 34-residue stretch at 662–695 (FSHEVKEAMSGCLACKACSTQCPIKIDVPEFRSR) folds into the 4Fe-4S ferredoxin-type domain. [4Fe-4S] cluster-binding residues include Cys-673, Cys-676, Cys-679, and Cys-683.

In the N-terminal section; belongs to the FAD-binding oxidoreductase/transferase type 4 family. Homotetramer. The cofactor is [4Fe-4S] cluster. Requires FAD as cofactor.

The enzyme catalyses (R)-2-hydroxyglutarate + A = 2-oxoglutarate + AH2. With respect to regulation, activity is completely inhibited by the addition of 0.5 mM Mn(2+), Ni(2+), or Co(2+) and partially inhibited by 0.5 mM Zn(2+). Its function is as follows. Catalyzes the oxidation of D-2-hydroxyglutarate (D-2-HGA) to 2-oxoglutarate. Appears to be the only D2HGDH in E.coli, providing the way to recycle D-2-HGA produced during L-serine synthesis by SerA, by converting it back to 2-oxoglutarate. The physiological molecule that functions as the primary electron acceptor during D-2-HGA oxidation by YdiJ in E.coli is unknown. Shows strict substrate specificity towards D-2-HGA, since it has no detectable activity on L-2-hydroxyglutarate, L-malate, D-malate, L-lactate, D-lactate, L-tartrate, D-tartrate, L-glycerate, D-glycerate, glutarate, or pyruvate. This chain is D-2-hydroxyglutarate dehydrogenase (ydiJ), found in Escherichia coli (strain K12).